The chain runs to 177 residues: SKP1-like protein 15 (177 aa).

The interaction with the F-box domain of F-box proteins stretch occupies residues 108–167 (ILAANYLNVEGLLGLTCQTVADYIKDKTPEEVRELFNIENDFTHEEEEEAIRKENAWAFE).

This sequence belongs to the SKP1 family. As to quaternary structure, part of a SCF (SKP1-cullin-F-box) protein ligase complex. Expressed at low levels in seedlings and leaves.

The protein localises to the nucleus. It participates in protein modification; protein ubiquitination. Its function is as follows. Involved in ubiquitination and subsequent proteasomal degradation of target proteins. Together with CUL1, RBX1 and a F-box protein, it forms a SCF E3 ubiquitin ligase complex. The functional specificity of this complex depends on the type of F-box protein. In the SCF complex, it serves as an adapter that links the F-box protein to CUL1. In Arabidopsis thaliana (Mouse-ear cress), this protein is SKP1-like protein 15 (ASK15).